The chain runs to 321 residues: Lipoyl synthase (321 aa).

Residues Cys-68, Cys-73, Cys-79, Cys-94, Cys-98, Cys-101, and Ser-308 each coordinate [4Fe-4S] cluster. The Radical SAM core domain maps to 80–297 (FNHGTATFMI…KELAESIGFT (218 aa)).

The protein belongs to the radical SAM superfamily. Lipoyl synthase family. [4Fe-4S] cluster serves as cofactor.

The protein localises to the cytoplasm. It carries out the reaction [[Fe-S] cluster scaffold protein carrying a second [4Fe-4S](2+) cluster] + N(6)-octanoyl-L-lysyl-[protein] + 2 oxidized [2Fe-2S]-[ferredoxin] + 2 S-adenosyl-L-methionine + 4 H(+) = [[Fe-S] cluster scaffold protein] + N(6)-[(R)-dihydrolipoyl]-L-lysyl-[protein] + 4 Fe(3+) + 2 hydrogen sulfide + 2 5'-deoxyadenosine + 2 L-methionine + 2 reduced [2Fe-2S]-[ferredoxin]. It functions in the pathway protein modification; protein lipoylation via endogenous pathway; protein N(6)-(lipoyl)lysine from octanoyl-[acyl-carrier-protein]: step 2/2. Catalyzes the radical-mediated insertion of two sulfur atoms into the C-6 and C-8 positions of the octanoyl moiety bound to the lipoyl domains of lipoate-dependent enzymes, thereby converting the octanoylated domains into lipoylated derivatives. This is Lipoyl synthase from Shewanella halifaxensis (strain HAW-EB4).